We begin with the raw amino-acid sequence, 1070 residues long: DNA-directed RNA polymerase subunit beta (1070 aa).

It belongs to the RNA polymerase beta chain family. In plastids the minimal PEP RNA polymerase catalytic core is composed of four subunits: alpha, beta, beta', and beta''. When a (nuclear-encoded) sigma factor is associated with the core the holoenzyme is formed, which can initiate transcription.

The protein resides in the plastid. It localises to the chloroplast. The enzyme catalyses RNA(n) + a ribonucleoside 5'-triphosphate = RNA(n+1) + diphosphate. In terms of biological role, DNA-dependent RNA polymerase catalyzes the transcription of DNA into RNA using the four ribonucleoside triphosphates as substrates. The polypeptide is DNA-directed RNA polymerase subunit beta (Dioscorea elephantipes (Elephant's foot yam)).